Here is a 301-residue protein sequence, read N- to C-terminus: MAQTNPKVQTLIDAIPYFKKFYGKTIVIKYGGSAQTSDDLKEKFAQDIVLLTLLGIKPVVVHGGGARITELLNKLEIPSSFVDGYRVTCKESMRVVEMVLSGEINKNIASLLNFHGAKAIGISGKDSGIIKAVPKDGGKFGYTGDITSVNGELINNLIKEGFIPVIAPIANGDEANHPGFNINADVAACEIAMALKAQKVIFLTDTIGVLNKSGELIQTLDKANVEMFKKDGTIAGGMIPKVDSCIEAIHNGVNKAHIIDGRVEHSILLELFTSDGIGTQFIRVDNPNNGIDIEKLLNKQD.

Substrate contacts are provided by residues 64–65 (GG), arginine 86, and asparagine 181.

It belongs to the acetylglutamate kinase family. ArgB subfamily.

It is found in the cytoplasm. It carries out the reaction N-acetyl-L-glutamate + ATP = N-acetyl-L-glutamyl 5-phosphate + ADP. Its pathway is amino-acid biosynthesis; L-arginine biosynthesis; N(2)-acetyl-L-ornithine from L-glutamate: step 2/4. Its function is as follows. Catalyzes the ATP-dependent phosphorylation of N-acetyl-L-glutamate. The polypeptide is Acetylglutamate kinase (Aliarcobacter butzleri (strain RM4018) (Arcobacter butzleri)).